Reading from the N-terminus, the 2388-residue chain is MASGPRNDDIAIVGLACRFPGGASNETKLWDLLSNRESAFTEVPPERFNVDAYHHPSPNKLNTLNSRGAHFMHEDVSAFDAPFFGITAQEANAMDPAARMLLELTFEALESAGQKLEDVAGSDTSCYVGCFTRDYHEMLYRDIESAPMYTGTGTGFSLFSNRISWFYDFRGPSMTLDTACSSSLVGLHLACRGLQAGESKMAVVCGANVILSPDIALTLSNLHMLSMDGLSRSFAEGTTGYGRGEGIASLILKRVEDALRDGDPIRAVIRGSGVNQDGHTKGITVPSSEAQADLIQTVYSSAGLDPSETGYFEAHGTGTAVGDPLELGAIAKSISKSRKVENKLVVGSIKSNIGHLEGAAGLAGVIKSVLMVEKNAILPNIHFEKPNRRIPFEQWKIKIPTELMPWPASGVRRASVNSFGYGGTNAHVILDDAESYLQKRLSNGHSEENGMELLKETRIFLLSARDEASLERLKQVYSDYIADVAGRRSPDNLFDESAYLDGLAYTLGCRRSVFPCRSFITASTLSELQESLSVQRLISTKAATSSRLGFVFTGQGAQWARMGLVLMDYPVFAQSIQEADRYLSEELRSSWSVLEELGKDAEHSQIGLAEFSQPLCTILQVALVDLLTSWQILPATVVGHSSGEIAAAYSFGAITKQDAWKISYWRGQLCAQLPLKRPELRGAMMAVGLGREEALSYIEKTGNGQAVIACVNSPSSVTLSGDETAINDIESALQAQNIFARKLNVQNAYHSHHMQPLADEYLAALEGLSTLSQEKAGTVKMASSVTGALINHTDLGPSYWVQNLVSPVLFSNAVEALLKQSTKGRRQARANEPAFDYLVEIGPHAALKGPLRQILQAHEASQIPYSSVLMRGEDGPVAALSAAGDLVCRGIQVDIKAVNRFQGRAIPLTNLPTYPWNHSLKYWADSRVSRARQHRKYGRHDLLGAPTQDSDELEPRWRHFLRVSDNPWIQDHIVHSSILYPGSGILAMPLHALQTLADSHRDVESIGLRDVSIVKAIVVPDDQFGLEVFLRMRRQRPRNGTWNGWWEFSVCSNQENDHVEEHGFGLGKIHYRPEKDTSVKTATNHVNDEFEREFDEVQATSTASISPVDFYAVAKSVGLTYGPSFQGLTEINAGNAKCSWKIQVPDTQKIMPAGVESPHIVHPTTLDIVFHSLFAAIGDGHLDMQHAAVPIGLKSMKISVDLPTGGNTFLKGISKVSRDAGRDIVADIRVAAESSNTPSIIVEGLRCRELPNGNSQSGPSETIKAPIGHVVQKIDVDLIEPIQLAQHIQKRFLERKEDGTLASEDLGEAIITIVDLVAHKNPRSSLLQVGGVTPELTQRILSNLEADNVSAKRFKNIKVVDANQELISQLETQYATPAGTVQFEKVTLDEAQSLAELKESSIDLAIVNIEELHSDKVSEYLANVLRSLKPGGKVLKIDSAGRNGAIGASDTLSFDTLCAGPEHVLSFATKGTAEKANTENFRTVILLPRCPSENVKKVASALEQVITVKGAIDTVIWSAEMPSLENSSTVISLLEFDDAFVADLSEEDFSSLKTLALGVKRILWVAHGTDPQMQTAAGWLRSLSNENMGIDYCYLLLESATDQEALDVAKLIERVSSTEEMEREYTERDDGLCCSRWAAKTELSALVGADSDQSKDATMRLGEARHGLTLTGKRGKLPSDARFTSVDVLDQNLTENEVMIDVRSVLLSTNDVQGTGQTGWREAAGVVVATGTAGSFEVGTAVSFVYDGPISTKAKINSKYCSTLSGTPEFQDALLQSVTYPTVYHGLCTLGQLRCDKTIFVQGGSSILGQAAISLARRLGATVFASVRDEEQNSILQRLGVPSDKILNDNVCERSSIIKRVNEGRGFDVIFNATGDEETIAELWQCIARGGKFINADANKKDTPATFNLSAKPFTMGASFEIIDMNEYLTNDFSTYQSIRDESESFRTRCSAVGLQIPVFTAGNIHEALDSVHVPTGLGKAVLLFSPDSKIPVSPDVKNQLRLRPDATYVLAGGLGGLGRSLAKLMVGSGARHLAFLSRSGPGSAAAQSISEEFSPLGVTVNFYGCDVADSESVSHTFGNIAKNQALPPIRGIIQSAAVLRDSIFENMSHTQWTEAVRPKVQGSWNLHQASLSGPCAKEGLDFFVMLASISGFVGNRGQANYAGGNSFQDALAKYRKSLGLAATSVDLGLMQDIGLIAERGGQSNLSDDTVVPLTAKDFELIFKLAMNSEGHDVPAQIVTGLPTGGILQKQGIETLPFYYRDPRFSAMQFMDLDETLTSAGGSAGNESVSMEEQLASAKSREQANGIVLEALRAQVAKALRCPAEDIDTARPLHYYGMDSLMAVDMRGWVQGKLKAEISLFDVMSGSSISALAEKISKASKLIKAELE.

The Ketosynthase family 3 (KS3) domain maps to Asn-7 to Asp-432. Residues Cys-180, His-315, and His-355 each act as for beta-ketoacyl synthase activity in the active site. The malonyl-CoA:ACP transacylase (MAT) domain stretch occupies residues Gly-549–Gly-875. Ser-641 functions as the For malonyltransferase activity in the catalytic mechanism. Residues His-940–Glu-1074 form an N-terminal hotdog fold region. A PKS/mFAS DH domain is found at His-940–Gln-1256. The segment at Asp-941–Pro-1251 is dehydratase (DH) domain. His-972 (proton acceptor; for dehydratase activity) is an active-site residue. The segment at Thr-1102–Gln-1256 is C-terminal hotdog fold. Catalysis depends on Asp-1167, which acts as the Proton donor; for dehydratase activity. Residues Lys-1676–Leu-1983 form an enoyl reductase (ER) domain region. A ketoreductase (KR) domain region spans residues Ala-2007–Met-2191. Residues Gln-2303–Ser-2380 form the Carrier domain. O-(pantetheine 4'-phosphoryl)serine is present on Ser-2340.

It depends on pantetheine 4'-phosphate as a cofactor.

Highly reducing polyketide synthase; part of a gene cluster that mediates the biosynthesis of a yet unidentified natural product. The protein is Highly reducing polyketide synthase Preu1 of Preussia isomera (Coprophilous fungus).